The chain runs to 230 residues: Somatolactin (230 aa).

The first 23 residues, 1–23, serve as a signal peptide directing secretion; sequence MKKTTVLQVCMVFVVCSLQAVIG. Intrachain disulfides connect Cys28/Cys38, Cys87/Cys202, and Cys219/Cys227. Asn226 carries an N-linked (GlcNAc...) asparagine glycan.

Belongs to the somatotropin/prolactin family.

The protein resides in the secreted. The polypeptide is Somatolactin (Carassius auratus (Goldfish)).